Reading from the N-terminus, the 148-residue chain is uncharacterized protein (148 aa).

Residues 65–79 (VDSTPSVDSTGSTSD) show a composition bias toward low complexity. A disordered region spans residues 65-85 (VDSTPSVDSTGSTSDVVDDRG).

This is an uncharacterized protein from Saccharomyces cerevisiae (strain ATCC 204508 / S288c) (Baker's yeast).